The following is a 220-amino-acid chain: GTP-binding nuclear protein GSP2/CNR2 (220 aa).

S2 is modified (N-acetylserine). Phosphoserine is present on S2. One can recognise a Small GTPase Ran-type domain in the interval 10–174; that stretch reads EVPTFKLVLV…LWLARKLAGN (165 aa). Position 21–28 (21–28) interacts with GTP; that stretch reads DGGTGKTT. A switch-I region spans residues 40-48; that stretch reads KKYIATIGV. Residues G71, 125 to 128, and 153 to 155 contribute to the GTP site; these read NKVD and SAK. The interval 71–87 is switch-II; that stretch reads GQEKFGGLRDGYYINAQ.

Belongs to the small GTPase superfamily. Ran family. Found in a nuclear export complex with RanGTP, exportin and pre-miRNA.

The protein resides in the nucleus. Its function is as follows. GTP-binding protein involved in nucleocytoplasmic transport. Required for the import of protein into the nucleus and also for RNA export. Not essential for cell viability. The sequence is that of GTP-binding nuclear protein GSP2/CNR2 (GSP2) from Saccharomyces cerevisiae (strain ATCC 204508 / S288c) (Baker's yeast).